The primary structure comprises 313 residues: Lactamase-like protein ptaB (313 aa).

Zn(2+) is bound by residues His104, His106, Asp108, and His109. Asp108 functions as the Proton donor/acceptor in the catalytic mechanism.

This sequence belongs to the metallo-beta-lactamase superfamily. Zn(2+) is required as a cofactor.

The enzyme catalyses atrochrysone carboxyl-[ACP] + H2O = atrochrysone carboxylate + holo-[ACP] + H(+). Its pathway is secondary metabolite biosynthesis. Its function is as follows. Lactamase-like protein; part of the gene cluster that mediates the biosynthesis of pestheic acid, a diphenyl ether which is a biosynthetic precursor of the unique chloropupukeananes. The biosynthesis initiates from condensation of acetate and malonate units catalyzed by the non-reducing PKS ptaA. As the ptaA protein is TE/CLC domain-deficient, hydrolysis and Claisen cyclization of the polyketide could be catalyzed by ptaB containing a beta-lactamase domain. The ptaB protein might hydrolyze the thioester bond between the ACP of ptaA and the intermediate to release atrochrysone carboxylic acid, which is spontaneously dehydrated to form endocrocin anthrone. Endocrocin anthrone is then converted to endocrocin, catalyzed by the anthrone oxygenase ptaC. Spontaneous decarboxylation of endocrocin occurs to generate emodin. An O-methyltransferase (ptaH or ptaI) could methylate emodin to form physcion. PtaJ could then catalyze the oxidative cleavage of physcion, and rotation of the intermediate could then afford desmethylisosulochrin. PtaF, a putative NADH-dependent oxidoreductase, might also participate in the oxidative cleavage step. Desmethylisosulochrin is then transformed by another O-methyltransferase (ptaH or ptaI) to form isosulochrin. Chlorination of isosulochrin by ptaM in the cyclohexadienone B ring then produces chloroisosulochrin. PtaE is responsible for the oxidative coupling reactions of both benzophenones isosulochrin and chloroisosulochrin to RES-1214-1 and pestheic acid respectively, regardless of chlorination. This chain is Lactamase-like protein ptaB, found in Pestalotiopsis fici (strain W106-1 / CGMCC3.15140).